A 373-amino-acid polypeptide reads, in one-letter code: LIM domain-binding protein 2 (373 aa).

Disordered stretches follow at residues 244 to 287 (APPA…KTPA) and 327 to 373 (QYDA…QASQ). Positions 263 to 280 (STSSTSNSSAGNTTNSAG) are enriched in low complexity. The region spanning 298-337 (DVMVVGEPTLMGGEFGDEDERLITRLENTQYDAANGMDDE) is the LIM interaction domain (LID) domain. Residues 341 to 373 (NNSPALGNNSPWNSKPPATQETKSENAPPQASQ) show a composition bias toward polar residues.

The protein belongs to the LDB family. In terms of assembly, interacts with LHX9. Interacts with SLK; leading to negatively regulate SLK kinase activity. Interacts with LMO4. Interacts with PITX1. Interacts with LHX3. Post-translationally, ubiquitinated by RLIM/RNF12, leading to its degradation by the proteasome. In terms of tissue distribution, expressed in multiple tissues including heart, brain, liver, kidney, testis, lung and muscle, with expression highest in the brain, trigeminal ganglia, and lung.

It localises to the nucleus. Transcription cofactor. Binds to the LIM domain of a wide variety of LIM domain-containing transcription factors. In terms of biological role, regulates the transcriptional activity of LIM-containing proteins such as LHX3 or PITX1. The chain is LIM domain-binding protein 2 (Ldb2) from Mus musculus (Mouse).